The sequence spans 426 residues: Trigger factor (426 aa).

Residues 160–240 (GDTVIGDVTK…IKEVKHLELP (81 aa)) enclose the PPIase FKBP-type domain.

It belongs to the FKBP-type PPIase family. Tig subfamily.

It localises to the cytoplasm. The enzyme catalyses [protein]-peptidylproline (omega=180) = [protein]-peptidylproline (omega=0). In terms of biological role, involved in protein export. Acts as a chaperone by maintaining the newly synthesized protein in an open conformation. Functions as a peptidyl-prolyl cis-trans isomerase. The chain is Trigger factor from Chlorobaculum tepidum (strain ATCC 49652 / DSM 12025 / NBRC 103806 / TLS) (Chlorobium tepidum).